A 1416-amino-acid chain; its full sequence is DNA-directed RNA polymerase subunit beta' (1416 aa).

Residues C60, C62, C75, and C78 each coordinate Zn(2+). Mg(2+) contacts are provided by D449, D451, and D453. The Zn(2+) site is built by C781, C855, C862, and C865.

It belongs to the RNA polymerase beta' chain family. In terms of assembly, the RNAP catalytic core consists of 2 alpha, 1 beta, 1 beta' and 1 omega subunit. When a sigma factor is associated with the core the holoenzyme is formed, which can initiate transcription. It depends on Mg(2+) as a cofactor. Requires Zn(2+) as cofactor.

It catalyses the reaction RNA(n) + a ribonucleoside 5'-triphosphate = RNA(n+1) + diphosphate. In terms of biological role, DNA-dependent RNA polymerase catalyzes the transcription of DNA into RNA using the four ribonucleoside triphosphates as substrates. This chain is DNA-directed RNA polymerase subunit beta', found in Treponema pallidum (strain Nichols).